The following is a 195-amino-acid chain: MRLNDTEIEQHLKDGIIGVEPAPQANNISGVTLDIHLGNDFRVLQDHAAPFIDISGSREAIEAAIQEVMSDEIVLKDDQAFFIHPGEFALAVTHESITLPADMVGWLDGRSSLARLGLMVHVTAHRIDPGWSGQIVLEFFNSGKLPLALRAGMKIGAISFEKLSGPCARPYNKREDAKYRDQHSAVASRISADGG.

DCTP contacts are provided by residues R110–R115, D128, V136–E138, Y171, K178, and Q182. E138 (proton donor/acceptor) is an active-site residue.

It belongs to the dCTP deaminase family. Homotrimer.

The enzyme catalyses dCTP + H2O + H(+) = dUTP + NH4(+). It functions in the pathway pyrimidine metabolism; dUMP biosynthesis; dUMP from dCTP (dUTP route): step 1/2. Catalyzes the deamination of dCTP to dUTP. The protein is dCTP deaminase of Idiomarina loihiensis (strain ATCC BAA-735 / DSM 15497 / L2-TR).